Consider the following 465-residue polypeptide: VGFKAGVKDYKLTYYTPDYETKDTDILAAFRVTPQPGVPPEEAGAAVAAESSTGTWTTVWTDGLTSLDRYKGRCYHIEPVAGEENQFIAYVAYPLDLFEEGSVTNMFTSIVGNVFGFKALRALRLEDLRIPPAYSKTFQGPPHGIQVERDKLNKYGRPLLGCTIKPKLGLSAKNYGRAVYECLRGGLDFTKDDENVNSQPFMRWRDRFLFCAEAIYKAQAETGEIKGHYLNATAGTCEEMMKRAVFARELGVPIVMHDYLTGGFTANTSLAQYCRDNGLLLHIHRAMHAVIDRQKNHGMHFRVLAKALRMSGGDHIHAGTVVGKLEGEREITLGFVDLLRDDFIEKDRSRGIYFTQDWVSLPGVIPVASGGIHVWHMPALTEIFGDDSVLQFGGGTLGHPWGNAPGAVANRVALEACVQARNEGRDLAREGNEIIREASKWSPELAAACEVWKEIKFEFPAMDTL.

K4 bears the N6,N6,N6-trimethyllysine mark. N113 and T163 together coordinate substrate. The Proton acceptor role is filled by K165. K167 is a binding site for substrate. The Mg(2+) site is built by K191, D193, and E194. At K191 the chain carries N6-carboxylysine. Catalysis depends on H284, which acts as the Proton acceptor. Substrate is bound by residues R285, H317, and S369.

It belongs to the RuBisCO large chain family. Type I subfamily. In terms of assembly, heterohexadecamer of 8 large chains and 8 small chains; disulfide-linked. The disulfide link is formed within the large subunit homodimers. Mg(2+) serves as cofactor. The disulfide bond which can form in the large chain dimeric partners within the hexadecamer appears to be associated with oxidative stress and protein turnover.

The protein resides in the plastid. The protein localises to the chloroplast. The enzyme catalyses 2 (2R)-3-phosphoglycerate + 2 H(+) = D-ribulose 1,5-bisphosphate + CO2 + H2O. The catalysed reaction is D-ribulose 1,5-bisphosphate + O2 = 2-phosphoglycolate + (2R)-3-phosphoglycerate + 2 H(+). Its function is as follows. RuBisCO catalyzes two reactions: the carboxylation of D-ribulose 1,5-bisphosphate, the primary event in carbon dioxide fixation, as well as the oxidative fragmentation of the pentose substrate in the photorespiration process. Both reactions occur simultaneously and in competition at the same active site. The chain is Ribulose bisphosphate carboxylase large chain from Byrsonima crassifolia (Cajuil cimarron).